A 263-amino-acid chain; its full sequence is Small ribosomal subunit protein bS1c (263 aa).

3 S1 motif domains span residues 27–96 (GDIV…LSIR), 114–178 (DSLL…LSHR), and 192–260 (GNII…LSMK).

It belongs to the bacterial ribosomal protein bS1 family.

Its subcellular location is the plastid. The protein resides in the chloroplast. This chain is Small ribosomal subunit protein bS1c (rps1), found in Porphyra purpurea (Red seaweed).